A 491-amino-acid chain; its full sequence is Protein nucleotidyltransferase YdiU (491 aa).

8 residues coordinate ATP: glycine 94, glycine 96, arginine 97, lysine 117, aspartate 129, glycine 130, arginine 180, and arginine 187. The Proton acceptor role is filled by aspartate 256. Asparagine 257 and aspartate 266 together coordinate Mg(2+). Residue aspartate 266 coordinates ATP.

It belongs to the SELO family. The cofactor is Mg(2+). Mn(2+) serves as cofactor.

It catalyses the reaction L-seryl-[protein] + ATP = 3-O-(5'-adenylyl)-L-seryl-[protein] + diphosphate. It carries out the reaction L-threonyl-[protein] + ATP = 3-O-(5'-adenylyl)-L-threonyl-[protein] + diphosphate. The catalysed reaction is L-tyrosyl-[protein] + ATP = O-(5'-adenylyl)-L-tyrosyl-[protein] + diphosphate. The enzyme catalyses L-histidyl-[protein] + UTP = N(tele)-(5'-uridylyl)-L-histidyl-[protein] + diphosphate. It catalyses the reaction L-seryl-[protein] + UTP = O-(5'-uridylyl)-L-seryl-[protein] + diphosphate. It carries out the reaction L-tyrosyl-[protein] + UTP = O-(5'-uridylyl)-L-tyrosyl-[protein] + diphosphate. Nucleotidyltransferase involved in the post-translational modification of proteins. It can catalyze the addition of adenosine monophosphate (AMP) or uridine monophosphate (UMP) to a protein, resulting in modifications known as AMPylation and UMPylation. The chain is Protein nucleotidyltransferase YdiU from Clostridium botulinum (strain Eklund 17B / Type B).